A 714-amino-acid chain; its full sequence is Fatty acid oxidation complex subunit alpha (714 aa).

Residues 1–190 (MEMASAFTLN…KLGLVDDVVP (190 aa)) form an enoyl-CoA hydratase region. The interval 306-714 (APLNSVGILG…FWKTTATDLQ (409 aa)) is 3-hydroxyacyl-CoA dehydrogenase.

In the N-terminal section; belongs to the enoyl-CoA hydratase/isomerase family. It in the central section; belongs to the 3-hydroxyacyl-CoA dehydrogenase family. As to quaternary structure, heterotetramer of two alpha chains (FadJ) and two beta chains (FadI).

It is found in the cytoplasm. It catalyses the reaction a (3S)-3-hydroxyacyl-CoA = a (2E)-enoyl-CoA + H2O. The enzyme catalyses a 4-saturated-(3S)-3-hydroxyacyl-CoA = a (3E)-enoyl-CoA + H2O. The catalysed reaction is a (3S)-3-hydroxyacyl-CoA + NAD(+) = a 3-oxoacyl-CoA + NADH + H(+). It carries out the reaction (3S)-3-hydroxybutanoyl-CoA = (3R)-3-hydroxybutanoyl-CoA. The protein operates within lipid metabolism; fatty acid beta-oxidation. Functionally, catalyzes the formation of a hydroxyacyl-CoA by addition of water on enoyl-CoA. Also exhibits 3-hydroxyacyl-CoA epimerase and 3-hydroxyacyl-CoA dehydrogenase activities. The sequence is that of Fatty acid oxidation complex subunit alpha from Escherichia coli (strain SMS-3-5 / SECEC).